The sequence spans 625 residues: TORTIFOLIA1-like protein 4 (625 aa).

The tract at residues 1–34 (MSVHGRFPASPPISLSPSSSSTSPSSQSPSTPPD) is disordered. Low complexity predominate over residues 12–29 (PISLSPSSSSTSPSSQSP). HEAT repeat units lie at residues 69 to 106 (DSFS…YHGD), 110 to 147 (PHLA…HVTR), 149 to 186 (PFAS…AATD), 190 to 227 (EQLR…AGGA), and 230 to 268 (KPVL…AEDL). The tract at residues 391–466 (SVDNKGPHFT…VKNCKDDVEE (76 aa)) is disordered. 3 stretches are compositionally biased toward basic and acidic residues: residues 404-413 (KSSEETEEKA), 420-434 (IIKH…EDSK), and 455-466 (DSVKNCKDDVEE). The residue at position 475 (S475) is a Phosphoserine. The interval 582–625 (GMRESTDTNNGQRGGSVFQKRSRRDQFQDCMHTTLQKPTTRLST) is disordered. A compositionally biased stretch (polar residues) spans 612-625 (MHTTLQKPTTRLST).

In Arabidopsis thaliana (Mouse-ear cress), this protein is TORTIFOLIA1-like protein 4.